We begin with the raw amino-acid sequence, 120 residues long: Aspartate 1-decarboxylase (120 aa).

The active-site Schiff-base intermediate with substrate; via pyruvic acid is the Ser25. Position 25 is a pyruvic acid (Ser) (Ser25). Thr57 contributes to the substrate binding site. Residue Tyr58 is the Proton donor of the active site. Gly73 to Ala75 provides a ligand contact to substrate.

It belongs to the PanD family. As to quaternary structure, heterooctamer of four alpha and four beta subunits. Requires pyruvate as cofactor. Is synthesized initially as an inactive proenzyme, which is activated by self-cleavage at a specific serine bond to produce a beta-subunit with a hydroxyl group at its C-terminus and an alpha-subunit with a pyruvoyl group at its N-terminus.

The protein resides in the cytoplasm. The enzyme catalyses L-aspartate + H(+) = beta-alanine + CO2. It participates in cofactor biosynthesis; (R)-pantothenate biosynthesis; beta-alanine from L-aspartate: step 1/1. Catalyzes the pyruvoyl-dependent decarboxylation of aspartate to produce beta-alanine. The chain is Aspartate 1-decarboxylase from Deinococcus radiodurans (strain ATCC 13939 / DSM 20539 / JCM 16871 / CCUG 27074 / LMG 4051 / NBRC 15346 / NCIMB 9279 / VKM B-1422 / R1).